A 360-amino-acid polypeptide reads, in one-letter code: 3-isopropylmalate dehydrogenase (360 aa).

76 to 89 (GPKWDTIERDIRPE) is an NAD(+) binding site. Positions 96, 106, 134, and 224 each coordinate substrate. Mg(2+) contacts are provided by aspartate 224, aspartate 248, and aspartate 252. 282–294 (GSAPDIAGQGIAN) contacts NAD(+).

This sequence belongs to the isocitrate and isopropylmalate dehydrogenases family. LeuB type 1 subfamily. In terms of assembly, homodimer. Mg(2+) is required as a cofactor. The cofactor is Mn(2+).

The protein resides in the cytoplasm. It catalyses the reaction (2R,3S)-3-isopropylmalate + NAD(+) = 4-methyl-2-oxopentanoate + CO2 + NADH. It participates in amino-acid biosynthesis; L-leucine biosynthesis; L-leucine from 3-methyl-2-oxobutanoate: step 3/4. Its function is as follows. Catalyzes the oxidation of 3-carboxy-2-hydroxy-4-methylpentanoate (3-isopropylmalate) to 3-carboxy-4-methyl-2-oxopentanoate. The product decarboxylates to 4-methyl-2 oxopentanoate. The chain is 3-isopropylmalate dehydrogenase from Pseudomonas syringae pv. tomato (strain ATCC BAA-871 / DC3000).